The sequence spans 94 residues: Large ribosomal subunit protein bL27 (94 aa).

A propeptide spanning residues 1 to 9 is cleaved from the precursor; the sequence is MLELNLQLF. The tract at residues 12 to 33 is disordered; that stretch reads KKGGGSTSNGRDSQAKRLGAKA.

It belongs to the bacterial ribosomal protein bL27 family. The N-terminus is cleaved by ribosomal processing cysteine protease Prp.

In Lactococcus lactis subsp. cremoris (strain MG1363), this protein is Large ribosomal subunit protein bL27.